A 67-amino-acid chain; its full sequence is Large ribosomal subunit protein uL29 (67 aa).

Belongs to the universal ribosomal protein uL29 family.

This Methanothrix thermoacetophila (strain DSM 6194 / JCM 14653 / NBRC 101360 / PT) (Methanosaeta thermophila) protein is Large ribosomal subunit protein uL29.